We begin with the raw amino-acid sequence, 476 residues long: Glutamyl-tRNA(Gln) amidotransferase subunit A (476 aa).

Active-site charge relay system residues include Lys-70 and Ser-145. The active-site Acyl-ester intermediate is Ser-169.

It belongs to the amidase family. GatA subfamily. Heterotrimer of A, B and C subunits.

It carries out the reaction L-glutamyl-tRNA(Gln) + L-glutamine + ATP + H2O = L-glutaminyl-tRNA(Gln) + L-glutamate + ADP + phosphate + H(+). Allows the formation of correctly charged Gln-tRNA(Gln) through the transamidation of misacylated Glu-tRNA(Gln) in organisms which lack glutaminyl-tRNA synthetase. The reaction takes place in the presence of glutamine and ATP through an activated gamma-phospho-Glu-tRNA(Gln). The polypeptide is Glutamyl-tRNA(Gln) amidotransferase subunit A (Methanosarcina mazei (strain ATCC BAA-159 / DSM 3647 / Goe1 / Go1 / JCM 11833 / OCM 88) (Methanosarcina frisia)).